A 449-amino-acid chain; its full sequence is Glucose-6-phosphate isomerase (449 aa).

E291 serves as the catalytic Proton donor. Catalysis depends on residues H312 and K426.

This sequence belongs to the GPI family.

The protein localises to the cytoplasm. It carries out the reaction alpha-D-glucose 6-phosphate = beta-D-fructose 6-phosphate. It functions in the pathway carbohydrate biosynthesis; gluconeogenesis. Its pathway is carbohydrate degradation; glycolysis; D-glyceraldehyde 3-phosphate and glycerone phosphate from D-glucose: step 2/4. Its function is as follows. Catalyzes the reversible isomerization of glucose-6-phosphate to fructose-6-phosphate. In Clostridium botulinum (strain Eklund 17B / Type B), this protein is Glucose-6-phosphate isomerase.